The sequence spans 292 residues: Peroxisomal 2,4-dienoyl-CoA reductase [(3E)-enoyl-CoA-producing] (292 aa).

Residue A2 is modified to N-acetylalanine. Residues 35–40 (GGGSGI), 60–64 (RSLPR), and D86 each bind NADP(+). R60 contacts substrate. Residues R88, F118, and 126 to 128 (SFN) each bind substrate. K151 is subject to N6-acetyllysine. Residues K182 and 208–214 (PGPISGT) contribute to the NADP(+) site. A substrate-binding site is contributed by R219. At S287 the chain carries Phosphoserine. Positions 290-292 (AKL) match the Microbody targeting signal motif. The residue at position 291 (K291) is an N6-acetyllysine.

The protein belongs to the short-chain dehydrogenases/reductases (SDR) family. 2,4-dienoyl-CoA reductase subfamily. In terms of assembly, monomer, dimer and oligomer.

It is found in the peroxisome. It carries out the reaction a (2E,4Z)-dienoyl-CoA + NADPH + H(+) = a 4,5-saturated-(3E)-enoyl-CoA + NADP(+). It catalyses the reaction a (2E,4E)-dienoyl-CoA + NADPH + H(+) = a 4,5-saturated-(3E)-enoyl-CoA + NADP(+). The enzyme catalyses (2E,4E)-hexadienoyl-CoA + NADPH + H(+) = (3E)-hexenoyl-CoA + NADP(+). The catalysed reaction is (2E,4E)-decadienoyl-CoA + NADPH + H(+) = (3E)-decenoyl-CoA + NADP(+). It carries out the reaction (2E,4Z,7Z,10Z,13Z,16Z,19Z)-docosaheptaenoyl-CoA + NADPH + H(+) = (3E,7Z,10Z,13Z,16Z,19Z)-docosahexaenoyl-CoA + NADP(+). Auxiliary enzyme of beta-oxidation. Participates in the degradation of unsaturated fatty enoyl-CoA esters having double bonds in both even- and odd-numbered positions in peroxisome. Catalyzes the NADP-dependent reduction of 2,4-dienoyl-CoA to yield trans-3-enoyl-CoA. Has activity towards short and medium chain 2,4-dienoyl-CoAs, but also towards 2,4,7,10,13,16,19-docosaheptaenoyl-CoA, suggesting that it does not constitute a rate limiting step in the peroxisomal degradation of docosahexaenoic acid. In Pongo abelii (Sumatran orangutan), this protein is Peroxisomal 2,4-dienoyl-CoA reductase [(3E)-enoyl-CoA-producing] (DECR2).